The sequence spans 1058 residues: Ubiquitin-like modifier-activating enzyme 1 (1058 aa).

Residues 1–46 are disordered; the sequence is MSSSPLSKKRRVSGPDPKPGSNCSPAQSALSEVSSVPTNGMAKNGS. The residue at position 2 (S2) is an N-acetylserine. A phosphoserine mark is found at S4, S13, S21, S24, and S46. Over residues 21-38 the composition is skewed to polar residues; it reads SNCSPAQSALSEVSSVPT. Residue Y55 is modified to Phosphotyrosine. 2 repeat units span residues 63–199 and 459–611. Residues 63–611 are 2 approximate repeats; the sequence is GHEAMKMLQT…GTKGNVQVVI (549 aa). ATP-binding positions include A478, D504, R515, K528, and 576–577; that span reads DN. K528 carries the post-translational modification N6-succinyllysine. The active-site Glycyl thioester intermediate is C632. Residue K671 is modified to N6-acetyllysine. At T800 the chain carries Phosphothreonine. S810, S816, S820, and S835 each carry phosphoserine. K980 is subject to N6-acetyllysine.

This sequence belongs to the ubiquitin-activating E1 family. Monomer. Interacts with GAN (via BTB domain). ISGylated. In terms of tissue distribution, ubiquitously expressed. In testis, expressed in A spermatogonia and spermatids but at very low levels in pachytene spermatocytes.

Its subcellular location is the cytoplasm. It localises to the mitochondrion. The protein resides in the nucleus. The enzyme catalyses ATP + ubiquitin + [E1 ubiquitin-activating enzyme]-L-cysteine = AMP + diphosphate + S-ubiquitinyl-[E1 ubiquitin-activating enzyme]-L-cysteine.. The protein operates within protein modification; protein ubiquitination. In terms of biological role, catalyzes the first step in ubiquitin conjugation to mark cellular proteins for degradation through the ubiquitin-proteasome system. Activates ubiquitin by first adenylating its C-terminal glycine residue with ATP, and thereafter linking this residue to the side chain of a cysteine residue in E1, yielding a ubiquitin-E1 thioester and free AMP. Essential for the formation of radiation-induced foci, timely DNA repair and for response to replication stress. Promotes the recruitment of TP53BP1 and BRCA1 at DNA damage sites. This is Ubiquitin-like modifier-activating enzyme 1 (Uba1) from Mus musculus (Mouse).